The chain runs to 399 residues: S-adenosylmethionine synthase (399 aa).

Residue H17 coordinates ATP. D19 serves as a coordination point for Mg(2+). Residue E52 coordinates K(+). L-methionine contacts are provided by E65 and Q109. A flexible loop region spans residues 109–119; it reads QSADIAQGVDA. ATP contacts are provided by residues 177-179, 243-244, D252, 258-259, A275, and K279; these read DSK, KF, and RK. D252 provides a ligand contact to L-methionine. K283 contacts L-methionine.

This sequence belongs to the AdoMet synthase family. Homotetramer; dimer of dimers. Mg(2+) serves as cofactor. Requires K(+) as cofactor.

The protein resides in the cytoplasm. The enzyme catalyses L-methionine + ATP + H2O = S-adenosyl-L-methionine + phosphate + diphosphate. It participates in amino-acid biosynthesis; S-adenosyl-L-methionine biosynthesis; S-adenosyl-L-methionine from L-methionine: step 1/1. Its function is as follows. Catalyzes the formation of S-adenosylmethionine (AdoMet) from methionine and ATP. The overall synthetic reaction is composed of two sequential steps, AdoMet formation and the subsequent tripolyphosphate hydrolysis which occurs prior to release of AdoMet from the enzyme. In Bradyrhizobium sp. (strain ORS 278), this protein is S-adenosylmethionine synthase.